We begin with the raw amino-acid sequence, 86 residues long: Small ribosomal subunit protein bS18 (86 aa).

This sequence belongs to the bacterial ribosomal protein bS18 family. As to quaternary structure, part of the 30S ribosomal subunit. Forms a tight heterodimer with protein bS6.

Binds as a heterodimer with protein bS6 to the central domain of the 16S rRNA, where it helps stabilize the platform of the 30S subunit. The sequence is that of Small ribosomal subunit protein bS18 from Campylobacter fetus subsp. fetus (strain 82-40).